A 126-amino-acid chain; its full sequence is MPEHTKVSAEDQALLNKFARSYQTQTQLKADVKEAKTLIDNINEASDEILLLDDEDSASIPCRIGSCFVHFNGDSLNEHLEGKKTTAEKVLSEKTSELDAISADMEQIKKVLYAKFGDQINLDAEE.

It belongs to the prefoldin subunit beta family. In terms of assembly, heterohexamer of two PFD-alpha type and four PFD-beta type subunits.

Binds specifically to cytosolic chaperonin (c-CPN) and transfers target proteins to it. Binds to nascent polypeptide chain and promotes folding in an environment in which there are many competing pathways for nonnative proteins. The protein is Probable prefoldin subunit 4 (pfd-4) of Caenorhabditis elegans.